The chain runs to 156 residues: SsrA-binding protein (156 aa).

This sequence belongs to the SmpB family.

It localises to the cytoplasm. Its function is as follows. Required for rescue of stalled ribosomes mediated by trans-translation. Binds to transfer-messenger RNA (tmRNA), required for stable association of tmRNA with ribosomes. tmRNA and SmpB together mimic tRNA shape, replacing the anticodon stem-loop with SmpB. tmRNA is encoded by the ssrA gene; the 2 termini fold to resemble tRNA(Ala) and it encodes a 'tag peptide', a short internal open reading frame. During trans-translation Ala-aminoacylated tmRNA acts like a tRNA, entering the A-site of stalled ribosomes, displacing the stalled mRNA. The ribosome then switches to translate the ORF on the tmRNA; the nascent peptide is terminated with the 'tag peptide' encoded by the tmRNA and targeted for degradation. The ribosome is freed to recommence translation, which seems to be the essential function of trans-translation. The sequence is that of SsrA-binding protein from Lactiplantibacillus plantarum (strain ATCC BAA-793 / NCIMB 8826 / WCFS1) (Lactobacillus plantarum).